A 918-amino-acid chain; its full sequence is Chaperone protein ClpC1, chloroplastic (918 aa).

One can recognise a Clp R domain in the interval 88–230 (FERFTEKAIK…RTQVIRMVGE (143 aa)). Repeat stretches follow at residues 91 to 156 (FTEK…IGRG) and 166 to 230 (FTPR…MVGE). The segment at 251–498 (LEEYGTNLTK…RVRLRHAQLP (248 aa)) is i. 296-303 (GEPGVGKT) contributes to the ATP binding site. One can recognise a UVR domain in the interval 505-540 (DKELRQVTKDKNEAVRGQDFEKAGELRDREMELKAQ). The interval 565–756 (VTEADIQHIV…LLIMTSNVGS (192 aa)) is II. Residue 639 to 646 (GPTGVGKS) participates in ATP binding.

The protein belongs to the ClpA/ClpB family. ClpC subfamily. As to expression, widely expressed.

It is found in the plastid. Its subcellular location is the chloroplast. Functionally, molecular chaperone that may interact with a ClpP-like protease involved in degradation of denatured proteins in the chloroplast. This chain is Chaperone protein ClpC1, chloroplastic (CLPC1), found in Oryza sativa subsp. japonica (Rice).